Reading from the N-terminus, the 410-residue chain is Peptidase T (410 aa).

His-79 is a Zn(2+) binding site. Asp-81 is an active-site residue. Position 142 (Asp-142) interacts with Zn(2+). Glu-176 serves as the catalytic Proton acceptor. Glu-177, Asp-199, and His-381 together coordinate Zn(2+).

Belongs to the peptidase M20B family. Zn(2+) serves as cofactor.

It is found in the cytoplasm. It catalyses the reaction Release of the N-terminal residue from a tripeptide.. Cleaves the N-terminal amino acid of tripeptides. The sequence is that of Peptidase T from Bacillus cereus (strain ATCC 10987 / NRS 248).